Here is a 351-residue protein sequence, read N- to C-terminus: DNA polymerase IV (351 aa).

Residues 4-185 (IIHVDMDCFF…LPLAKIPGVG (182 aa)) form the UmuC domain. Mg(2+) is bound by residues Asp-8 and Asp-103. The active site involves Glu-104.

Belongs to the DNA polymerase type-Y family. As to quaternary structure, monomer. Mg(2+) serves as cofactor.

The protein resides in the cytoplasm. It catalyses the reaction DNA(n) + a 2'-deoxyribonucleoside 5'-triphosphate = DNA(n+1) + diphosphate. Functionally, poorly processive, error-prone DNA polymerase involved in untargeted mutagenesis. Copies undamaged DNA at stalled replication forks, which arise in vivo from mismatched or misaligned primer ends. These misaligned primers can be extended by PolIV. Exhibits no 3'-5' exonuclease (proofreading) activity. May be involved in translesional synthesis, in conjunction with the beta clamp from PolIII. This chain is DNA polymerase IV, found in Salmonella arizonae (strain ATCC BAA-731 / CDC346-86 / RSK2980).